A 251-amino-acid polypeptide reads, in one-letter code: Imidazole glycerol phosphate synthase subunit HisF (251 aa).

Catalysis depends on residues Asp11 and Asp130.

This sequence belongs to the HisA/HisF family. Heterodimer of HisH and HisF.

Its subcellular location is the cytoplasm. The catalysed reaction is 5-[(5-phospho-1-deoxy-D-ribulos-1-ylimino)methylamino]-1-(5-phospho-beta-D-ribosyl)imidazole-4-carboxamide + L-glutamine = D-erythro-1-(imidazol-4-yl)glycerol 3-phosphate + 5-amino-1-(5-phospho-beta-D-ribosyl)imidazole-4-carboxamide + L-glutamate + H(+). The protein operates within amino-acid biosynthesis; L-histidine biosynthesis; L-histidine from 5-phospho-alpha-D-ribose 1-diphosphate: step 5/9. In terms of biological role, IGPS catalyzes the conversion of PRFAR and glutamine to IGP, AICAR and glutamate. The HisF subunit catalyzes the cyclization activity that produces IGP and AICAR from PRFAR using the ammonia provided by the HisH subunit. This is Imidazole glycerol phosphate synthase subunit HisF from Natranaerobius thermophilus (strain ATCC BAA-1301 / DSM 18059 / JW/NM-WN-LF).